Here is a 247-residue protein sequence, read N- to C-terminus: 14-3-3 protein gamma (247 aa).

Position 1 is an N-acetylmethionine (Met1). At Val2 the chain carries N-acetylvaline; in 14-3-3 protein gamma, N-terminally processed. The segment at 2 to 247 (VDREQLVQKA…QDDDGGEGNN (246 aa)) is interaction with SPATA18/MIEAP. The residue at position 71 (Ser71) is a Phosphoserine. A Phosphotyrosine modification is found at Tyr133. Residue Thr145 is modified to Phosphothreonine. A Phosphoserine modification is found at Ser215. Phosphothreonine is present on Thr234. Residue Ser235 is modified to Phosphoserine.

This sequence belongs to the 14-3-3 family. Homodimer. Part of a complex that contains DSG3, PKP1, YAP1 and YWHAG; the complex is required for localization of DSG3 and YAP1 to the cell membrane in keratinocytes. Interacts with SAMSN1. Interacts with RAF1, SSH1 and CRTC2/TORC2. Interacts with ABL1 (phosphorylated form); the interaction retains it in the cytoplasm. Interacts with GAB2. Interacts with MDM4 (phosphorylated); negatively regulates MDM4 activity toward TP53. Interacts with PKA-phosphorylated AANAT and SIRT2. Interacts with the 'Thr-369' phosphorylated form of DAPK2. Interacts with PI4KB, TBC1D22A and TBC1D22B. Interacts with SLITRK1. Interacts with LRRK2; this interaction is dependent on LRRK2 phosphorylation. Interacts with MARK2 and MARK3. Interacts with MEFV. Interacts with ENDOG, TSC2 and PIK3C3; interaction with ENDOG weakens its interaction with TSC2 and PIK3C3. Interacts with (phosphorylated) WDR24. Interacts with BEST1; this interaction promotes L-glutamate channel activity leading to the positive regulation of NMDA glutamate receptor activity through the L-glutamate secretion. Interacts with PKP1 (when phosphorylated); the interaction results in translocation of PKP1 to the cytoplasm and loss of intercellular adhesion in keratinocytes. Interacts with SPATA18/MIEAP; a protein that also plays a role in MALM. Phosphorylated by various PKC isozymes.

It is found in the cytoplasm. The protein resides in the cytosol. Its subcellular location is the mitochondrion matrix. Functionally, adapter protein implicated in the regulation of a large spectrum of both general and specialized signaling pathways. Binds to a large number of partners, usually by recognition of a phosphoserine or phosphothreonine motif. Binding generally results in the modulation of the activity of the binding partner. Promotes inactivation of WDR24 component of the GATOR2 complex by binding to phosphorylated WDR24. Participates in the positive regulation of NMDA glutamate receptor activity by promoting the L-glutamate secretion through interaction with BEST1. Reduces keratinocyte intercellular adhesion, via interacting with PKP1 and sequestering it in the cytoplasm, thereby reducing its incorporation into desmosomes. Plays a role in mitochondrial protein catabolic process (also named MALM) that promotes the degradation of damaged proteins inside mitochondria. In Bos taurus (Bovine), this protein is 14-3-3 protein gamma.